The following is a 591-amino-acid chain: PE-PGRS family protein PE_PGRS5 (591 aa).

Positions 1-93 constitute a PE domain; the sequence is MSFVIAQPEM…AGAYASAEAA (93 aa). The PGRS stretch occupies residues 94-591; that stretch reads NAGPNMLAAV…GGKGNNGNPG (498 aa). 6 stretches are compositionally biased toward gly residues: residues 303-324, 336-363, 371-412, 477-491, 539-567, and 579-591; these read GAGG…GNGG, ASGG…GHVS, GAGG…GDGG, SEAG…GGDG, AGTG…GVNG, and GATG…GNPG. Disordered stretches follow at residues 303 to 412, 468 to 491, and 539 to 591; these read GAGG…GDGG, GSVN…GGDG, and AGTG…GNPG.

It belongs to the mycobacterial PE family. PGRS subfamily. As to quaternary structure, interacts with human TLR4.

It is found in the host endoplasmic reticulum. Its function is as follows. Involved in endoplasmic reticulum (ER) stress-mediated apoptosis through human Toll-like receptor 4 (TLR4) signaling pathway. Localizes to the host ER, leading to ER stress, disruption of intracellular Ca(2+) homeostasis and increase of nitric oxide (NO) and reactive oxygen species (ROS) levels. Stress response results in caspase-8 activation and apoptosis of macrophage cells. Apoptosis may lead to dissemination of the bacteria, thereby spreading the disease. This is PE-PGRS family protein PE_PGRS5 from Mycobacterium tuberculosis (strain ATCC 25618 / H37Rv).